A 179-amino-acid polypeptide reads, in one-letter code: MARLKEIYRNEIAPKLKEELKLSNVMEVPRVTKITLNMGLGEAIGDKKVIEHAVADLEKITGQKPVVTFARKSIAGFKVREGWPIGVKVTLRRDKMYEFLDRLLAISLPRVRDFRGLNAKSFDGRGNYSMGVKEQIIFPEIDYDKIDALRGLDITLTTTARSDDEGRALLRAFKFPFRN.

The protein belongs to the universal ribosomal protein uL5 family. In terms of assembly, part of the 50S ribosomal subunit; part of the 5S rRNA/L5/L18/L25 subcomplex. Contacts the 5S rRNA and the P site tRNA. Forms a bridge to the 30S subunit in the 70S ribosome.

Functionally, this is one of the proteins that bind and probably mediate the attachment of the 5S RNA into the large ribosomal subunit, where it forms part of the central protuberance. In the 70S ribosome it contacts protein S13 of the 30S subunit (bridge B1b), connecting the 2 subunits; this bridge is implicated in subunit movement. Contacts the P site tRNA; the 5S rRNA and some of its associated proteins might help stabilize positioning of ribosome-bound tRNAs. The polypeptide is Large ribosomal subunit protein uL5 (Pseudomonas entomophila (strain L48)).